A 489-amino-acid chain; its full sequence is Acetyl-coenzyme A carboxylase carboxyl transferase subunit beta, chloroplastic (489 aa).

Residues 222–489 (LWVQCENCYG…FFPLNSNSIK (268 aa)) form the CoA carboxyltransferase N-terminal domain. C226, C229, C245, and C248 together coordinate Zn(2+). Residues 226-248 (CENCYGLNYKKFFRSKMNICEQC) form a C4-type zinc finger.

It belongs to the AccD/PCCB family. In terms of assembly, acetyl-CoA carboxylase is a heterohexamer composed of biotin carboxyl carrier protein, biotin carboxylase and 2 subunits each of ACCase subunit alpha and ACCase plastid-coded subunit beta (accD). Requires Zn(2+) as cofactor.

The protein resides in the plastid. The protein localises to the chloroplast stroma. It catalyses the reaction N(6)-carboxybiotinyl-L-lysyl-[protein] + acetyl-CoA = N(6)-biotinyl-L-lysyl-[protein] + malonyl-CoA. It participates in lipid metabolism; malonyl-CoA biosynthesis; malonyl-CoA from acetyl-CoA: step 1/1. In terms of biological role, component of the acetyl coenzyme A carboxylase (ACC) complex. Biotin carboxylase (BC) catalyzes the carboxylation of biotin on its carrier protein (BCCP) and then the CO(2) group is transferred by the transcarboxylase to acetyl-CoA to form malonyl-CoA. This is Acetyl-coenzyme A carboxylase carboxyl transferase subunit beta, chloroplastic from Buxus microphylla (Littleleaf boxwood).